Reading from the N-terminus, the 1323-residue chain is ABC transporter gloK (1323 aa).

Transmembrane regions (helical) follow at residues 6–26 (AIASIFTAIVCFKFIILTLEA), 102–122 (PHALLKVMLATFKGLLLAGIL), 138–158 (VAYGLIAAYAIVYIGIAVMST), 217–237 (IWASLIEIALSLWLLEVRLGV), 240–260 (VAAVFVIIGNICTLLGCVFGF), 325–345 (LLVGIVTLSYVSTTMAPVFAF), and 359–379 (PLLAASAYTSLTIFSLLGQAV). An ABC transmembrane type-1 1 domain is found at 142-380 (LIAAYAIVYI…IFSLLGQAVS (239 aa)). Residues 471–697 (IRDCSACWSK…SSYLESLGTR (227 aa)) enclose the ABC transporter 1 domain. 503-510 (GPIGSGKS) lines the ATP pocket. 7 helical membrane-spanning segments follow: residues 748-768 (GWVTWWVFVLLCSGFVFGLVF), 795-815 (YALWPLMAIVIFLGACAWLMI), 821-841 (AAIQFHGILLNSALSAPLVYF), 859-879 (LIDMELPTALIGTTVTFLSCI), 891-910 (YVAAAIPALIVFLYYIQLFY), 976-996 (LNLTLELAVAFLAIILVSIAL), and 1006-1026 (IGVALLSIVGFGLNLKTLVYT). An ABC transmembrane type-1 2 domain is found at 752 to 1031 (WWVFVLLCSG…TLVYTWTSLE (280 aa)). One can recognise an ABC transporter 2 domain in the interval 1069-1300 (IRFQSVSAAY…PSFFASLLKA (232 aa)). 1103 to 1110 (GRTGSGKS) is an ATP binding site.

The protein belongs to the ABC transporter superfamily. ABCC family. Conjugate transporter (TC 3.A.1.208) subfamily.

Its subcellular location is the cell membrane. Functionally, 3-isopropylmalate dehydratase large subunit; part of the gene cluster that mediates the biosynthesis of pneumocandins, lipohexapeptides of the echinocandin family that prevent fungal cell wall formation by non-competitive inhibition of beta-1,3-glucan synthase. Possibly secretes antifungal pneumocandins, thus avoiding of intracellular accumulation and ameliorating the toxicity to the producing cells. This Glarea lozoyensis (strain ATCC 20868 / MF5171) protein is ABC transporter gloK.